Reading from the N-terminus, the 551-residue chain is CTP synthase (551 aa).

The segment at 1 to 267 is amidoligase domain; that stretch reads MPKYVFVTGG…GRYVMEHLGW (267 aa). Ser13 provides a ligand contact to CTP. Ser13 lines the UTP pocket. 14-19 is an ATP binding site; sequence SVGKGI. Tyr54 is a binding site for L-glutamine. Asp71 is an ATP binding site. Mg(2+) is bound by residues Asp71 and Glu141. Residues 148–150, 188–193, and Lys224 contribute to the CTP site; these read DIE and KTKPTQ. Residues 188 to 193 and Lys224 each bind UTP; that span reads KTKPTQ. The Glutamine amidotransferase type-1 domain occupies 292–532; it reads RIALVGKYVE…IGVAKHVLRE (241 aa). Gly353 is an L-glutamine binding site. Cys380 (nucleophile; for glutamine hydrolysis) is an active-site residue. L-glutamine is bound by residues 381-384, Glu404, and Arg460; that span reads YGLH. Residues His505 and Glu507 contribute to the active site.

It belongs to the CTP synthase family. As to quaternary structure, homotetramer.

The catalysed reaction is UTP + L-glutamine + ATP + H2O = CTP + L-glutamate + ADP + phosphate + 2 H(+). The enzyme catalyses L-glutamine + H2O = L-glutamate + NH4(+). It carries out the reaction UTP + NH4(+) + ATP = CTP + ADP + phosphate + 2 H(+). It participates in pyrimidine metabolism; CTP biosynthesis via de novo pathway; CTP from UDP: step 2/2. Its activity is regulated as follows. Allosterically activated by GTP, when glutamine is the substrate; GTP has no effect on the reaction when ammonia is the substrate. The allosteric effector GTP functions by stabilizing the protein conformation that binds the tetrahedral intermediate(s) formed during glutamine hydrolysis. Inhibited by the product CTP, via allosteric rather than competitive inhibition. Catalyzes the ATP-dependent amination of UTP to CTP with either L-glutamine or ammonia as the source of nitrogen. Regulates intracellular CTP levels through interactions with the four ribonucleotide triphosphates. In Thermomicrobium roseum (strain ATCC 27502 / DSM 5159 / P-2), this protein is CTP synthase.